A 465-amino-acid polypeptide reads, in one-letter code: Gamma-aminobutyric acid receptor subunit rho-2 (465 aa).

The first 20 residues, 1–20, serve as a signal peptide directing secretion; it reads MPYLMRLALVLFCLMALVES. Residues 21 to 260 lie on the Extracellular side of the membrane; sequence RKPRRKRWTG…LYINFTLRRH (240 aa). Arg105 serves as a coordination point for 4-aminobutanoate. Asn120 carries an N-linked (GlcNAc...) asparagine glycan. Residue Ser169 participates in 4-aminobutanoate binding. A disulfide bridge connects residues Cys178 and Cys192. 4-aminobutanoate is bound at residue Glu197. A glycan (N-linked (GlcNAc...) asparagine) is linked at Asn254. A helical transmembrane segment spans residues 261–281; sequence IFFFLLQTYFPATLMVMLSWV. The Cytoplasmic portion of the chain corresponds to 282-293; that stretch reads SFWIDHRAVPAR. A helical transmembrane segment spans residues 294 to 314; the sequence is VSLGIMTVLTMSTIITGVNAS. Residues 315–325 lie on the Extracellular side of the membrane; the sequence is MPRVSYIRAVD. A helical transmembrane segment spans residues 326–346; that stretch reads IYLWVSFVFVFLSVLEYAAVN. At 347 to 443 the chain is on the cytoplasmic side; that stretch reads YLTTLQEQKE…IFQNTHAIDK (97 aa). The chain crosses the membrane as a helical span at residues 444–464; sequence YSRLIFPAFYIVFNLIYWSVF. A topological domain (extracellular) is located at residue Ser465.

This sequence belongs to the ligand-gated ion channel (TC 1.A.9) family. Gamma-aminobutyric acid receptor (TC 1.A.9.5) subfamily. GABRR2 sub-subfamily. In terms of assembly, three rho subunits (rho-1/GBRR1, rho-2/GBRR2 and rho-3/GBRR3) coassemble either to form functional homopentamers or heteropentamers. Rho-2 is unable to form a functional homopentamer. Interacts with SQSTM1. Expressed in the cerebellum.

The protein resides in the postsynaptic cell membrane. It localises to the cell membrane. The catalysed reaction is chloride(in) = chloride(out). Its function is as follows. Rho subunit of the pentameric ligand-gated chloride channels responsible for mediating the effects of gamma-aminobutyric acid (GABA), the major inhibitory neurotransmitter in the brain. Rho-containing GABA-gated chloride channels are a subclass of GABA(A) receptors (GABAARs) entirely composed of rho subunits, where GABA molecules bind at the rho intersubunit interfaces. When activated by GABA, rho-GABAARs selectively allow the flow of chloride anions across the cell membrane down their electrochemical gradient. Rho-2 GABAARs may contribute to the regulation of glial development in the cerebellum by controlling extrasynaptic transmission. Rho-2 GABAARs are also involved in neuronal tonic (extrasynaptic) and phasic (synaptic) transmission in the Purkinje neurons of the cerebellum. Rho-2 GABAARs expressed in retina may play a role in retinal neurotransmission. This chain is Gamma-aminobutyric acid receptor subunit rho-2, found in Mus musculus (Mouse).